The following is a 148-amino-acid chain: SsrA-binding protein (148 aa).

The segment at 124 to 148 (QFDKRETEKDRDWQREKARLMREKA) is disordered.

Belongs to the SmpB family.

It localises to the cytoplasm. Required for rescue of stalled ribosomes mediated by trans-translation. Binds to transfer-messenger RNA (tmRNA), required for stable association of tmRNA with ribosomes. tmRNA and SmpB together mimic tRNA shape, replacing the anticodon stem-loop with SmpB. tmRNA is encoded by the ssrA gene; the 2 termini fold to resemble tRNA(Ala) and it encodes a 'tag peptide', a short internal open reading frame. During trans-translation Ala-aminoacylated tmRNA acts like a tRNA, entering the A-site of stalled ribosomes, displacing the stalled mRNA. The ribosome then switches to translate the ORF on the tmRNA; the nascent peptide is terminated with the 'tag peptide' encoded by the tmRNA and targeted for degradation. The ribosome is freed to recommence translation, which seems to be the essential function of trans-translation. This chain is SsrA-binding protein, found in Ralstonia pickettii (strain 12J).